A 281-amino-acid polypeptide reads, in one-letter code: Acetyl-coenzyme A carboxylase carboxyl transferase subunit beta 2 (281 aa).

The 256-residue stretch at Leu-26 to Val-281 folds into the CoA carboxyltransferase N-terminal domain. Zn(2+)-binding residues include Cys-30, Cys-33, Cys-48, and Cys-51. A C4-type zinc finger spans residues Cys-30–Cys-51.

It belongs to the AccD/PCCB family. Acetyl-CoA carboxylase is a heterohexamer composed of biotin carboxyl carrier protein (AccB), biotin carboxylase (AccC) and two subunits each of ACCase subunit alpha (AccA) and ACCase subunit beta (AccD). The cofactor is Zn(2+).

It is found in the cytoplasm. The enzyme catalyses N(6)-carboxybiotinyl-L-lysyl-[protein] + acetyl-CoA = N(6)-biotinyl-L-lysyl-[protein] + malonyl-CoA. Its pathway is lipid metabolism; malonyl-CoA biosynthesis; malonyl-CoA from acetyl-CoA: step 1/1. Component of the acetyl coenzyme A carboxylase (ACC) complex. Biotin carboxylase (BC) catalyzes the carboxylation of biotin on its carrier protein (BCCP) and then the CO(2) group is transferred by the transcarboxylase to acetyl-CoA to form malonyl-CoA. This Lactiplantibacillus plantarum (strain JDM1) (Lactobacillus plantarum) protein is Acetyl-coenzyme A carboxylase carboxyl transferase subunit beta 2.